Consider the following 348-residue polypeptide: NAC domain-containing protein 101 (348 aa).

The NAC domain maps to 7-156 (IPPGYRFHPT…GWVVCRAFKK (150 aa)). The DNA-binding element occupies 107–162 (VGMRKTLVFYKGRAPNGQKSDWIMHEYRLETDENGPPHEEGWVVCRAFKKKLTTMN). Residues 325-348 (MVSMNASSSSSPCSFYSWAQNTHT) are disordered. The segment covering 327-341 (SMNASSSSSPCSFYS) has biased composition (low complexity).

Belongs to the plant vascular related NAC-domain protein family. Homodimer. As to expression, expressed in root inner metaxylem vessels and in hypocotyl vessels. Present in root developing xylems. Accumulates in the xylem but not in interfascicular fibers or pith cells in inflorescence stems. Absent from secondary xylem in roots.

It is found in the nucleus. Transcription activator that binds to the secondary wall NAC binding element (SNBE), 5'-(T/A)NN(C/T)(T/C/G)TNNNNNNNA(A/C)GN(A/C/T)(A/T)-3', and to the tracheary elements (TE) specific regulating cis-element (TERE), 5'-CTTNAAAGCNA-3', in the promoter of target genes (e.g. genes involved in secondary wall biosynthesis, cell wall modification such as xylan accumulation, and programmed cell death). Involved in xylem formation in roots and shoots, especially regulating metaxylem vessel differentiation by promoting immature xylem vessel-specific genes expression, especially genes regulating programmed cell death (PCD) and secondary wall formation in tracheary elements (TE). Can activate MYB25, MYB46, MYB58, MYB63, MYB83, MYB103, CESA4, LBD15, LBD30, ERF115, XCP1, XCP2, NAC010/SND3, KNAT7, ASL19 and ASL20 expression. This chain is NAC domain-containing protein 101, found in Arabidopsis thaliana (Mouse-ear cress).